The sequence spans 851 residues: Transcriptional regulator RFX1 (851 aa).

Composition is skewed to polar residues over residues 1–11 and 20–34; these read MSSDQTPQNRN and PRLQQQTSQIPSTGP. Disordered regions lie at residues 1-121, 134-170, and 195-230; these read MSSD…EPHP, QSQFQFDYSSPYIGQSQSQSQSQSQAQPQPHPQPQTY, and HEASSADNDSATNITTPQKRKKQKRSESVTPNTGEN. Basic and acidic residues predominate over residues 38–53; the sequence is QQRERSQEQESDHEHQ. Low complexity predominate over residues 54-84; the sequence is QAQQHLHQFQQSNLTPSTTAFPSSTSIPTFS. Polar residues predominate over residues 85 to 114; sequence KQDQGYHNQFSSPQSSYRKIGNFAQSSNAP. Low complexity predominate over residues 141 to 170; sequence YSSPYIGQSQSQSQSQSQAQPQPHPQPQTY. Residues 199 to 211 show a composition bias toward polar residues; the sequence is SADNDSATNITTP. The segment at residues 282 to 357 is a DNA-binding region (RFX-type winged-helix); that stretch reads GMVWLLNSCD…YHYCGIKLTG (76 aa). 2 disordered regions span residues 368-411 and 783-806; these read YQQK…SVSY and PPSLSSLPQTQQQNPVIQEETGTQ. The segment covering 384 to 393 has biased composition (polar residues); that stretch reads AQVGSSTSSA. Low complexity predominate over residues 783-797; the sequence is PPSLSSLPQTQQQNP.

The protein belongs to the RFX family.

The protein resides in the nucleus. Transcription factor involved in DNA damage responses, morphogenesis, and virulence. This chain is Transcriptional regulator RFX1 (RFX1), found in Candida albicans (strain SC5314 / ATCC MYA-2876) (Yeast).